Reading from the N-terminus, the 142-residue chain is Large ribosomal subunit protein uL11 (142 aa).

The protein belongs to the universal ribosomal protein uL11 family. Part of the ribosomal stalk of the 50S ribosomal subunit. Interacts with L10 and the large rRNA to form the base of the stalk. L10 forms an elongated spine to which L12 dimers bind in a sequential fashion forming a multimeric L10(L12)X complex. In terms of processing, one or more lysine residues are methylated.

Functionally, forms part of the ribosomal stalk which helps the ribosome interact with GTP-bound translation factors. The protein is Large ribosomal subunit protein uL11 of Baumannia cicadellinicola subsp. Homalodisca coagulata.